The following is a 2210-amino-acid chain: Filamin-A (2210 aa).

Calponin-homology (CH) domains follow at residues Lys15–Ser120 and His139–Leu242. Filamin repeat units lie at residues Arg249 to Val347, Gly349 to Val447, Ala448 to Val544, Gly545 to Ile635, Arg638 to Val734, Gly735 to Glu831, Gln832 to Val929, Lys930 to Val1022, Glu1023 to Val1121, Phe1122 to Ala1217, Phe1218 to Ala1312, Ser1322 to Val1423, Asp1424 to Ile1515, Thr1516 to Val1603, Arg1606 to Val1698, Ala1699 to Val1796, Leu1799 to Val1891, Pro1893 to Val1986, Lys1988 to Ala2079, and Thr2116 to Val2210.

It belongs to the filamin family. Interacts with Ten-m. Germline-specific in females (at protein level). Expressed in ovary.

The protein localises to the cytoplasm. Its subcellular location is the cytoskeleton. It is found in the cell membrane. Involved in the germline ring canal formation. May tether actin microfilament within the ovarian ring canal to the cell membrane. Contributes to actin microfilaments organization. This Drosophila melanogaster (Fruit fly) protein is Filamin-A (cher).